The primary structure comprises 371 residues: Liposome tubulation protein MamY (371 aa).

Over 1 to 18 (MLMNFVNNVSKTINGGAR) the chain is Cytoplasmic. Residues 19–39 (IVYVGSFSWAVLSLLFVTAFS) form a helical membrane-spanning segment. At 40 to 51 (GWNNIFSMLPHE) the chain is on the lumenal side. A helical transmembrane segment spans residues 52–72 (IFILVLTISLPIALIVLIFML). Over 73–371 (SQIVRTVESV…LIDGTPISDA (299 aa)) the chain is Cytoplasmic.

The protein belongs to the magnetosome MamY family. Probably interacts with MamX and MamZ proteins.

It is found in the magnetosome membrane. May be involved in constriction of the cell inner membrane to form mature magnetosomes. Binds cardiolipin and liposomes. May function with MamX, MamZ amd Mms6 in biomineralization. The polypeptide is Liposome tubulation protein MamY (Magnetospirillum gryphiswaldense (strain DSM 6361 / JCM 21280 / NBRC 15271 / MSR-1)).